A 154-amino-acid chain; its full sequence is 6,7-dimethyl-8-ribityllumazine synthase (154 aa).

Residues Phe-22, 56–58 (AFE), and 80–82 (AVI) contribute to the 5-amino-6-(D-ribitylamino)uracil site. 85–86 (AT) lines the (2S)-2-hydroxy-3-oxobutyl phosphate pocket. His-88 acts as the Proton donor in catalysis. 5-amino-6-(D-ribitylamino)uracil is bound at residue Phe-113. Position 127 (Arg-127) interacts with (2S)-2-hydroxy-3-oxobutyl phosphate.

The protein belongs to the DMRL synthase family. As to quaternary structure, forms an icosahedral capsid composed of 60 subunits, arranged as a dodecamer of pentamers.

The catalysed reaction is (2S)-2-hydroxy-3-oxobutyl phosphate + 5-amino-6-(D-ribitylamino)uracil = 6,7-dimethyl-8-(1-D-ribityl)lumazine + phosphate + 2 H2O + H(+). It participates in cofactor biosynthesis; riboflavin biosynthesis; riboflavin from 2-hydroxy-3-oxobutyl phosphate and 5-amino-6-(D-ribitylamino)uracil: step 1/2. Its function is as follows. Catalyzes the formation of 6,7-dimethyl-8-ribityllumazine by condensation of 5-amino-6-(D-ribitylamino)uracil with 3,4-dihydroxy-2-butanone 4-phosphate. This is the penultimate step in the biosynthesis of riboflavin. The sequence is that of 6,7-dimethyl-8-ribityllumazine synthase from Anoxybacillus flavithermus (strain DSM 21510 / WK1).